A 272-amino-acid polypeptide reads, in one-letter code: Insulin-like growth factor-binding protein 5 (272 aa).

A signal peptide spans 1 to 20; the sequence is MVLLTAVLLLLAAYAGPAQS. In terms of domain architecture, IGFBP N-terminal spans 23-103; the sequence is SFVHCEPCDE…LHGRGVCLNE (81 aa). 6 cysteine pairs are disulfide-bonded: Cys-27–Cys-53, Cys-30–Cys-55, Cys-38–Cys-56, Cys-45–Cys-59, Cys-67–Cys-80, and Cys-74–Cys-100. Residues 111-122 show a composition bias toward basic and acidic residues; that stretch reads KIERDSREHEEP. The disordered stretch occupies residues 111–130; sequence KIERDSREHEEPTTSEMAEE. Ser-116 carries the phosphoserine; by FAM20C modification. Thr-172 carries an O-linked (HexNAc...) threonine glycan. One can recognise a Thyroglobulin type-1 domain in the interval 189–263; the sequence is QGPCRRHMEA…MEYVDGDFQC (75 aa). 3 disulfide bridges follow: Cys-192–Cys-219, Cys-230–Cys-241, and Cys-243–Cys-263.

Interacts with IGF1; this interaction enhances the growth stimulatory effects of IGF1 on fibroblasts. Interacts with CAV1; this interaction allows trafficking of IGFBP5 from the plasma membrane to the nucleus. Interacts with NCL; this interaction is necessary for IGFBP5 localization to the nucleus. Post-translationally, cleaved by C1S in extracellular space. As to expression, osteosarcoma, and at lower levels in liver, kidney and brain.

The protein localises to the secreted. It localises to the cytoplasm. The protein resides in the nucleus. Its function is as follows. Multifunctional protein that plays a critical role in regulating the availability of IGFs to their receptors and thereby regulates IGF-mediated cellular processes including proliferation, differentiation, and apoptosis in a cell-type specific manner. Increases the cell proliferation of osteoblasts, intestinal smooth muscle cells and neuroblastoma cells. Enhances adhesion and survival of epithelial cells but decreases adhesion of mesenchymal cells. Once secreted, acts as a major mediator of mTORC1-dependent feedback inhibition of IGF1 signaling. Also plays a role in the induction of extracellular matrix (ECM) production and deposition independently of its nuclear translocation and binding to IGFs. Acts itself as a growth factor that can act independently of IGFs to regulate bone formation. Acts as a ligand for the ROR1 receptor which triggers formation of ROR1/HER2 heterodimer to enhance CREB oncogenic signaling. The chain is Insulin-like growth factor-binding protein 5 (IGFBP5) from Homo sapiens (Human).